An 845-amino-acid chain; its full sequence is Ribonucleoside-diphosphate reductase subunit alpha (845 aa).

One can recognise an ATP-cone domain in the interval 1–98 (MHIIKRNGEP…LYRDDRTKKR (98 aa)). Residues threonine 303, 318–319 (SC), glycine 347, 534–538 (NLCTE), and 725–729 (PTSST) contribute to the substrate site. Cysteines 319 and 574 form a disulfide. Catalysis depends on asparagine 534, which acts as the Proton acceptor. Cysteine 536 (cysteine radical intermediate) is an active-site residue. The active-site Proton acceptor is the glutamate 538.

The protein belongs to the ribonucleoside diphosphate reductase large chain family. Tetramer of two alpha and two beta subunits.

It carries out the reaction a 2'-deoxyribonucleoside 5'-diphosphate + [thioredoxin]-disulfide + H2O = a ribonucleoside 5'-diphosphate + [thioredoxin]-dithiol. Its activity is regulated as follows. Under complex allosteric control mediated by deoxynucleoside triphosphates and ATP binding. The type of nucleotide bound at the specificity site determines substrate preference. It seems probable that ATP makes the enzyme reduce CDP and UDP, dGTP favors ADP reduction and dTTP favors GDP reduction. Functionally, provides the precursors necessary for DNA synthesis. Catalyzes the biosynthesis of deoxyribonucleotides from the corresponding ribonucleotides. In Treponema pallidum (strain Nichols), this protein is Ribonucleoside-diphosphate reductase subunit alpha (nrdA).